Reading from the N-terminus, the 790-residue chain is Cadherin-6 (790 aa).

A signal peptide spans 1–18 (MRTYRYFLLLFWVGQPYP). Positions 19 to 53 (TFSNPLSKRTSGFPAKRKALELSANSRNELSRSKR) are excised as a propeptide. Cadherin domains lie at 54 to 159 (SWMW…EPIF), 160 to 268 (TKDV…PPRF), 269 to 383 (PQST…PPVF), 384 to 486 (SKLA…DNAP), and 487 to 608 (EFAE…LIHP). At 54–615 (SWMWNQFFLL…IHPTGLSTGA (562 aa)) the chain is on the extracellular side. A glycan (N-linked (GlcNAc...) asparagine) is linked at Asn-255. Residues 260 to 291 (DVNDNPPRFPQSTYQFKTPESSPPGTPIGRIK) are disordered. Residues 269-279 (PQSTYQFKTPE) are compositionally biased toward polar residues. 4 N-linked (GlcNAc...) asparagine glycosylation sites follow: Asn-399, Asn-437, Asn-455, and Asn-536. A helical membrane pass occupies residues 616–636 (LVAILLCIVILLVTVVLFAAL). Residues 637–790 (RRQRKKEPLI…YGGMDSDKDS (154 aa)) lie on the Cytoplasmic side of the membrane. Phosphoserine is present on residues Ser-786 and Ser-790.

Its subcellular location is the cell membrane. In terms of biological role, cadherins are calcium-dependent cell adhesion proteins. They preferentially interact with themselves in a homophilic manner in connecting cells; cadherins may thus contribute to the sorting of heterogeneous cell types. In Mus musculus (Mouse), this protein is Cadherin-6 (Cdh6).